A 175-amino-acid chain; its full sequence is R-phycoerythrin subunit beta (175 aa).

(2R,3E)-phycoerythrobilin is bound at residue C82.

It belongs to the phycobiliprotein family. Homodimer. Post-translationally, contains one covalently linked phycoerythrobilin chromophore.

Functionally, green-light absorbing phycoerythrin of unknown function. The sequence is that of R-phycoerythrin subunit beta (cpeB) from Prochlorococcus marinus subsp. pastoris (strain CCMP1986 / NIES-2087 / MED4).